A 458-amino-acid polypeptide reads, in one-letter code: Argininosuccinate lyase (458 aa).

Belongs to the lyase 1 family. Argininosuccinate lyase subfamily.

The protein localises to the cytoplasm. The enzyme catalyses 2-(N(omega)-L-arginino)succinate = fumarate + L-arginine. It participates in amino-acid biosynthesis; L-arginine biosynthesis; L-arginine from L-ornithine and carbamoyl phosphate: step 3/3. In Salmonella paratyphi B (strain ATCC BAA-1250 / SPB7), this protein is Argininosuccinate lyase.